Reading from the N-terminus, the 258-residue chain is UPF0246 protein YaaA (258 aa).

This sequence belongs to the UPF0246 family.

This Escherichia coli O127:H6 (strain E2348/69 / EPEC) protein is UPF0246 protein YaaA.